The following is a 148-amino-acid chain: Lysozyme C (148 aa).

Residues 1 to 18 form the signal peptide; the sequence is MKALTILGLVLLSVTVQG. The 130-residue stretch at 19 to 148 folds into the C-type lysozyme domain; the sequence is KIFERCELAR…VSQYVKGCGV (130 aa). Disulfide bonds link cysteine 24-cysteine 146, cysteine 48-cysteine 134, cysteine 83-cysteine 99, and cysteine 95-cysteine 113. Catalysis depends on residues glutamate 53 and aspartate 71.

The protein belongs to the glycosyl hydrolase 22 family. As to quaternary structure, monomer.

Its subcellular location is the secreted. It carries out the reaction Hydrolysis of (1-&gt;4)-beta-linkages between N-acetylmuramic acid and N-acetyl-D-glucosamine residues in a peptidoglycan and between N-acetyl-D-glucosamine residues in chitodextrins.. In terms of biological role, lysozymes have primarily a bacteriolytic function; those in tissues and body fluids are associated with the monocyte-macrophage system and enhance the activity of immunoagents. Also plays a role in digestion in this species. The protein is Lysozyme C (LYZ) of Semnopithecus entellus (Northern plains gray langur).